We begin with the raw amino-acid sequence, 619 residues long: Translation initiation factor eIF2B subunit delta (619 aa).

The span at 21–32 (GDYLDSKQEGKP) shows a compositional bias: basic and acidic residues. Residues 21–251 (GDYLDSKQEG…PKQRGKITKK (231 aa)) form a disordered region. Positions 42-56 (TNTSPVSIPTIISPP) are enriched in low complexity. The segment covering 57–84 (LGSNNSNYGKSPKSSYDNKQTSPLLSAS) has biased composition (polar residues). Positions 85–98 (NNRKNNNNNNNNNN) are enriched in low complexity. Residues 99-125 (ATSPKDSSIIGKNNVNSDLSKVSSSLN) show a composition bias toward polar residues. Over residues 136–199 (STSSTPTSTP…KQQSKQQATQ (64 aa)) the composition is skewed to low complexity. Positions 200–244 (QDKKDKEQQQQQQDKQDKESNEIKGSKEVAKDGQHGVKQFDDPKQ) are enriched in basic and acidic residues.

The protein belongs to the eIF-2B alpha/beta/delta subunits family. In terms of assembly, component of the translation initiation factor 2B (eIF2B) complex which is a heterodecamer of two sets of five different subunits: alpha, beta, gamma, delta and epsilon. Subunits alpha, beta and delta comprise a regulatory subcomplex and subunits epsilon and gamma comprise a catalytic subcomplex. Within the complex, the hexameric regulatory complex resides at the center, with the two heterodimeric catalytic subcomplexes bound on opposite sides.

It is found in the cytoplasm. The protein resides in the cytosol. Acts as a component of the translation initiation factor 2B (eIF2B) complex, which catalyzes the exchange of GDP for GTP on eukaryotic initiation factor 2 (eIF2) gamma subunit. Its guanine nucleotide exchange factor activity is repressed when bound to eIF2 complex phosphorylated on the alpha subunit, thereby limiting the amount of methionyl-initiator methionine tRNA available to the ribosome and consequently global translation is repressed. This chain is Translation initiation factor eIF2B subunit delta (eif2b4), found in Dictyostelium discoideum (Social amoeba).